We begin with the raw amino-acid sequence, 359 residues long: 4'-phosphopantetheinyl transferase A (359 aa).

The protein belongs to the P-Pant transferase superfamily.

It catalyses the reaction apo-[ACP] + CoA = holo-[ACP] + adenosine 3',5'-bisphosphate + H(+). Its activity is regulated as follows. Activity is inhibited bythe antifunfal copmpounds PD 404,182, 6-nitroso-1,2-benzopyrone, and calmidazolium chloride with IC(50) values of 3.9 uM, 35.2 uM, and 19.2 uM, respectively. Its function is as follows. Acyl-carrier-protein synthase that transfers the 4'-phosphopantetheine moiety from coenzyme A to a Ser of an acyl-carrier-protein. The 4'-phosphopantetheine (4'-PPT) portion of CoA provides the essential prosthetic group for a number of carrier proteins and multi-domain enzymes, priming them for the acceptance of acyl building blocks in fatty acid synthesis and many aspects of secondary metabolism mediated by polyketide synthases (PKSs) and non-ribosomal peptide synthetases (NRPSs). PptA is able to transfer the cofactor to a broad range of enzymes with acyl- or peptidyl-carrier protein domains and activates target enzymes involved in the synthesis of lysine, but also secondary metabolites including gliotoxin, fumigaclavine C, fumiquinazole A, fumiquinazoline C, pyripyroprene A, fumagillin, the siderophores triacetylfusarinine C (TAFC) and ferricrocin (FC), and dihydroxy naphthalene (DHN)-melanin. Plays an essential role in virulence. The sequence is that of 4'-phosphopantetheinyl transferase A from Aspergillus fumigatus (strain ATCC MYA-4609 / CBS 101355 / FGSC A1100 / Af293) (Neosartorya fumigata).